The following is a 406-amino-acid chain: NADH-ubiquinone oxidoreductase 49 kDa subunit (406 aa).

This sequence belongs to the complex I 49 kDa subunit family. In terms of assembly, complex I is composed of 45 different subunits. Component of the iron-sulfur (IP) fragment of the enzyme.

The protein resides in the mitochondrion inner membrane. It carries out the reaction a ubiquinone + NADH + 5 H(+)(in) = a ubiquinol + NAD(+) + 4 H(+)(out). Core subunit of the mitochondrial membrane respiratory chain NADH dehydrogenase (Complex I) that is believed to belong to the minimal assembly required for catalysis. Complex I functions in the transfer of electrons from NADH to the respiratory chain. The immediate electron acceptor for the enzyme is believed to be ubiquinone. This is NADH-ubiquinone oxidoreductase 49 kDa subunit (nad7) from Dictyostelium citrinum (Slime mold).